The primary structure comprises 507 residues: ATP synthase subunit alpha, chloroplastic (507 aa).

170-177 is an ATP binding site; sequence GDRQTGKT.

Belongs to the ATPase alpha/beta chains family. In terms of assembly, F-type ATPases have 2 components, CF(1) - the catalytic core - and CF(0) - the membrane proton channel. CF(1) has five subunits: alpha(3), beta(3), gamma(1), delta(1), epsilon(1). CF(0) has four main subunits: a, b, b' and c.

Its subcellular location is the plastid. The protein resides in the chloroplast thylakoid membrane. The catalysed reaction is ATP + H2O + 4 H(+)(in) = ADP + phosphate + 5 H(+)(out). Its function is as follows. Produces ATP from ADP in the presence of a proton gradient across the membrane. The alpha chain is a regulatory subunit. The chain is ATP synthase subunit alpha, chloroplastic from Pelargonium hortorum (Common geranium).